Reading from the N-terminus, the 137-residue chain is Putative pumilio homolog 25 (137 aa).

Pumilio repeat units follow at residues 70-105 (EFDSYFENLVKDRVGNYVVQRLIWGFKRTGIDLPHS) and 108-137 (SVLVTRSIHLCKHRYGYQVIEAFDRSTRLA).

The protein localises to the cytoplasm. Functionally, sequence-specific RNA-binding protein that regulates translation and mRNA stability by binding the 3'-UTR of target mRNAs. The chain is Putative pumilio homolog 25 (APUM25) from Arabidopsis thaliana (Mouse-ear cress).